Reading from the N-terminus, the 354-residue chain is UDP-3-O-acylglucosamine N-acyltransferase (354 aa).

The active-site Proton acceptor is the histidine 245.

Belongs to the transferase hexapeptide repeat family. LpxD subfamily. In terms of assembly, homotrimer.

It catalyses the reaction a UDP-3-O-[(3R)-3-hydroxyacyl]-alpha-D-glucosamine + a (3R)-hydroxyacyl-[ACP] = a UDP-2-N,3-O-bis[(3R)-3-hydroxyacyl]-alpha-D-glucosamine + holo-[ACP] + H(+). Its pathway is bacterial outer membrane biogenesis; LPS lipid A biosynthesis. Functionally, catalyzes the N-acylation of UDP-3-O-acylglucosamine using 3-hydroxyacyl-ACP as the acyl donor. Is involved in the biosynthesis of lipid A, a phosphorylated glycolipid that anchors the lipopolysaccharide to the outer membrane of the cell. The sequence is that of UDP-3-O-acylglucosamine N-acyltransferase from Anaeromyxobacter sp. (strain K).